The chain runs to 592 residues: MASTSRDVIAGRGIHSKVKSAKLLEVLNAMEEEESNNNREEIFIAPPDNAAGEFTDEDSGDEDSQRGAHLPGSVLHASVLCEDSGTGEDNDDLELQPAKKRQKAVVKPQRIWTKRDIRPDFGSWTASDPHIEDLKSQELSPVGLFELFFDEGTINFIVNETNRYAWQKNVNLSLTAQELKCVLGILILSGYISYPRRRMFWETSPDSHHHLVADAIRRDRFELIFSYLHFADNNELDASDRFAKVRPLIIRMNCNFQKHAPLEEFYSFGESMCEYFGHRGSKQLHRGKPVRLGYKIWCGTTSRGYLVWFEPSQGTLFTKPDRSLDLGGSMVIKFVDALQERGFLPYHIFFDKVFTSVKLMSILRKKGVKATGTVREYRTERCPLKDPKELKKMKRGSFDYKVDESEEIIVCRWHDSSVVNICSNAVGIEPVRLTSRHSGAAKTRTQVHQPSLVKLYQEKVGGVGRMDQNIAKYKVKIRGMKWYSSFIGYVIDAALNNAWQLHRICCQDAQVDLLAFRRYIACVYLESNADTTSQGRRSRRLETESRFDMIGHWIIHQDKRTRCALCHSQTNTRCEKCQKGVHAKCFREYHIR.

The segment at 31-69 (EEEESNNNREEIFIAPPDNAAGEFTDEDSGDEDSQRGAH) is disordered.

The protein is PiggyBac transposable element-derived protein 2 (PGBD2) of Homo sapiens (Human).